Consider the following 391-residue polypeptide: Winged helix repair factor 1 (391 aa).

2 stretches are compositionally biased toward low complexity: residues 1 to 24 and 49 to 63; these read MNIK…PSPI and LSFN…SNIN. The disordered stretch occupies residues 1-95; sequence MNIKRNQNNS…SITTTTATST (95 aa). Positions 64–74 are enriched in acidic residues; that stretch reads GEEDNDDDDRE. Residues 82 to 95 show a composition bias toward low complexity; sequence NPNPSITTTTATST.

This sequence belongs to the STK19 family.

Its subcellular location is the nucleus. Functionally, DNA-binding protein which is required for efficient transcription-coupled nucleotide excision repair. The sequence is that of Winged helix repair factor 1 from Dictyostelium discoideum (Social amoeba).